Here is a 144-residue protein sequence, read N- to C-terminus: Large ribosomal subunit protein uL13 (144 aa).

It belongs to the universal ribosomal protein uL13 family. As to quaternary structure, part of the 50S ribosomal subunit.

Its function is as follows. This protein is one of the early assembly proteins of the 50S ribosomal subunit, although it is not seen to bind rRNA by itself. It is important during the early stages of 50S assembly. The chain is Large ribosomal subunit protein uL13 from Clostridium botulinum (strain Alaska E43 / Type E3).